Consider the following 487-residue polypeptide: Protein nucleotidyltransferase YdiU (487 aa).

8 residues coordinate ATP: Gly91, Gly93, Arg94, Lys114, Asp126, Gly127, Arg177, and Arg184. The active-site Proton acceptor is the Asp253. 2 residues coordinate Mg(2+): Asn254 and Asp263. Asp263 serves as a coordination point for ATP.

This sequence belongs to the SELO family. The cofactor is Mg(2+). It depends on Mn(2+) as a cofactor.

It catalyses the reaction L-seryl-[protein] + ATP = 3-O-(5'-adenylyl)-L-seryl-[protein] + diphosphate. The catalysed reaction is L-threonyl-[protein] + ATP = 3-O-(5'-adenylyl)-L-threonyl-[protein] + diphosphate. The enzyme catalyses L-tyrosyl-[protein] + ATP = O-(5'-adenylyl)-L-tyrosyl-[protein] + diphosphate. It carries out the reaction L-histidyl-[protein] + UTP = N(tele)-(5'-uridylyl)-L-histidyl-[protein] + diphosphate. It catalyses the reaction L-seryl-[protein] + UTP = O-(5'-uridylyl)-L-seryl-[protein] + diphosphate. The catalysed reaction is L-tyrosyl-[protein] + UTP = O-(5'-uridylyl)-L-tyrosyl-[protein] + diphosphate. Nucleotidyltransferase involved in the post-translational modification of proteins. It can catalyze the addition of adenosine monophosphate (AMP) or uridine monophosphate (UMP) to a protein, resulting in modifications known as AMPylation and UMPylation. This chain is Protein nucleotidyltransferase YdiU, found in Yersinia pestis (strain Pestoides F).